We begin with the raw amino-acid sequence, 113 residues long: U11-theraphotoxin-Hhn1a (113 aa).

The signal sequence occupies residues 1 to 21 (MNTVRVAFLLVFVLAVSLGQA). The propeptide occupies 22–74 (DKDENRMEMQEKTEQGKSYLDFAENLLLQKLEEPEAKLLEEDSEESRNSRQKR). Basic and acidic residues predominate over residues 58-69 (KLLEEDSEESRN). The tract at residues 58-83 (KLLEEDSEESRNSRQKRCIGEGVPCD) is disordered. 3 disulfide bridges follow: Cys-75–Cys-90, Cys-82–Cys-95, and Cys-89–Cys-110.

This sequence belongs to the neurotoxin 14 (magi-1) family. 01 (HNTX-16) subfamily. In terms of tissue distribution, expressed by the venom gland.

It is found in the secreted. Functionally, probable ion channel inhibitor. The chain is U11-theraphotoxin-Hhn1a from Cyriopagopus hainanus (Chinese bird spider).